The following is a 139-amino-acid chain: Mitochondrial intermembrane space import and assembly protein 40 (139 aa).

Cystine bridges form between Cys-53/Cys-55, Cys-64/Cys-97, and Cys-74/Cys-87. The CHCH domain maps to 61–105 (SGPCGEQFKSAFSCFHYSQEEIKGSDCLDQFRAMQECMQKYPDIY). 2 short sequence motifs (cx9C motif) span residues 64-74 (CGEQFKSAFSC) and 87-97 (CLDQFRAMQEC). Residues 102 to 139 (PDIYPQEDDEDEAEKEKQNKEAEAFSTETSDTKEESSS) form a disordered region. The segment covering 115–124 (EKEKQNKEAE) has biased composition (basic and acidic residues).

As to quaternary structure, monomer. Can form homooligomers.

Its subcellular location is the mitochondrion intermembrane space. In terms of biological role, central component of a redox-sensitive mitochondrial intermembrane space import machinery which is required for the biogenesis of respiratory chain complexes. Functions as chaperone and catalyzes the formation of disulfide bonds in substrate proteins, such as COX17 or MICU1. Required for the import and folding of small cysteine-containing proteins (small Tim) in the mitochondrial intermembrane space (IMS). Precursor proteins to be imported into the IMS are translocated in their reduced form into the mitochondria. The polypeptide is Mitochondrial intermembrane space import and assembly protein 40 (chchd4) (Xenopus tropicalis (Western clawed frog)).